The sequence spans 747 residues: Sex-specific storage-protein 1 (747 aa).

Positions 1–15 are cleaved as a signal peptide; it reads MRVLVLLACLAAASA. N-linked (GlcNAc...) asparagine glycans are attached at residues N494 and N706.

It belongs to the hemocyanin family. In terms of tissue distribution, fat body.

It localises to the secreted. It is found in the extracellular space. Its function is as follows. Larval storage protein (LSP) which may serve as a store of amino acids for synthesis of adult proteins. This is Sex-specific storage-protein 1 (SP1) from Bombyx mori (Silk moth).